Consider the following 698-residue polypeptide: Protein arginine N-methyltransferase 7 (698 aa).

SAM-dependent MTase PRMT-type domains lie at 14 to 357 (QNTW…YSLW) and 366 to 698 (EKPA…EKSE).

The protein belongs to the class I-like SAM-binding methyltransferase superfamily. Protein arginine N-methyltransferase family. PRMT7 subfamily.

Functionally, essential arginine methyltransferase that can both catalyze the formation of omega-N monomethylarginine (MMA) and symmetrical dimethylarginine (sDMA). Specifically mediates the symmetrical dimethylation of arginine residues in the small nuclear ribonucleoproteins SmD1 and SmD3. The chain is Protein arginine N-methyltransferase 7 (Art7) from Drosophila mojavensis (Fruit fly).